The primary structure comprises 210 residues: Putative O-methyltransferase MSMEG_5073/MSMEI_4947 (210 aa).

S-adenosyl-L-methionine-binding positions include V37, E59, 61 to 62 (GT), S67, D85, and V86. D133 serves as a coordination point for substrate. D135 is a binding site for S-adenosyl-L-methionine.

The protein belongs to the class I-like SAM-binding methyltransferase superfamily. Cation-dependent O-methyltransferase family.

This Mycolicibacterium smegmatis (strain ATCC 700084 / mc(2)155) (Mycobacterium smegmatis) protein is Putative O-methyltransferase MSMEG_5073/MSMEI_4947.